A 176-amino-acid chain; its full sequence is Peptide deformylase (176 aa).

Positions 92 and 134 each coordinate Fe cation. The active site involves Glu-135. His-138 lines the Fe cation pocket.

The protein belongs to the polypeptide deformylase family. It depends on Fe(2+) as a cofactor.

The enzyme catalyses N-terminal N-formyl-L-methionyl-[peptide] + H2O = N-terminal L-methionyl-[peptide] + formate. In terms of biological role, removes the formyl group from the N-terminal Met of newly synthesized proteins. Requires at least a dipeptide for an efficient rate of reaction. N-terminal L-methionine is a prerequisite for activity but the enzyme has broad specificity at other positions. This Acinetobacter baumannii (strain SDF) protein is Peptide deformylase.